The chain runs to 197 residues: Dephospho-CoA kinase (197 aa).

The 196-residue stretch at 2 to 197 (IIGITGGIAS…SALLSLANPR (196 aa)) folds into the DPCK domain. 10–15 (ASGKST) is an ATP binding site.

The protein belongs to the CoaE family.

The protein localises to the cytoplasm. The catalysed reaction is 3'-dephospho-CoA + ATP = ADP + CoA + H(+). The protein operates within cofactor biosynthesis; coenzyme A biosynthesis; CoA from (R)-pantothenate: step 5/5. Catalyzes the phosphorylation of the 3'-hydroxyl group of dephosphocoenzyme A to form coenzyme A. The sequence is that of Dephospho-CoA kinase from Streptococcus pyogenes serotype M28 (strain MGAS6180).